The primary structure comprises 120 residues: NAD(P)H-quinone oxidoreductase subunit 3, chloroplastic (120 aa).

Helical transmembrane passes span 10–30 (FWVF…ISGV), 64–84 (IFAL…PWAM), and 88–108 (VLGV…IVGS).

It belongs to the complex I subunit 3 family. NDH is composed of at least 16 different subunits, 5 of which are encoded in the nucleus.

The protein resides in the plastid. Its subcellular location is the chloroplast thylakoid membrane. It carries out the reaction a plastoquinone + NADH + (n+1) H(+)(in) = a plastoquinol + NAD(+) + n H(+)(out). It catalyses the reaction a plastoquinone + NADPH + (n+1) H(+)(in) = a plastoquinol + NADP(+) + n H(+)(out). Its function is as follows. NDH shuttles electrons from NAD(P)H:plastoquinone, via FMN and iron-sulfur (Fe-S) centers, to quinones in the photosynthetic chain and possibly in a chloroplast respiratory chain. The immediate electron acceptor for the enzyme in this species is believed to be plastoquinone. Couples the redox reaction to proton translocation, and thus conserves the redox energy in a proton gradient. The sequence is that of NAD(P)H-quinone oxidoreductase subunit 3, chloroplastic from Pelargonium hortorum (Common geranium).